A 509-amino-acid chain; its full sequence is DEAD-box ATP-dependent RNA helicase CshA (509 aa).

The short motif at 2–30 (QNFKELGISDKTVQTLEAMGFKEPTPIQK) is the Q motif element. The 171-residue stretch at 33–203 (IPYALEGDDI…QQFMKAPKII (171 aa)) folds into the Helicase ATP-binding domain. An ATP-binding site is contributed by 46 to 53 (AQTGTGKT). A DEAD box motif is present at residues 150-153 (DEAD). In terms of domain architecture, Helicase C-terminal spans 214–375 (QIDEYYTIVK…LRPPHRKEVL (162 aa)). Composition is skewed to basic residues over residues 440 to 459 (ARKN…KRGN) and 467 to 482 (RRSK…KKNQ). Positions 440-509 (ARKNRSSKGG…KGRTFADHQK (70 aa)) are disordered. Basic and acidic residues predominate over residues 483-492 (KKFDRRDKQQ).

This sequence belongs to the DEAD box helicase family. CshA subfamily. As to quaternary structure, oligomerizes, may be a member of the RNA degradosome.

The protein localises to the cytoplasm. It catalyses the reaction ATP + H2O = ADP + phosphate + H(+). In terms of biological role, DEAD-box RNA helicase possibly involved in RNA degradation. Unwinds dsRNA in both 5'- and 3'-directions, has RNA-dependent ATPase activity. The protein is DEAD-box ATP-dependent RNA helicase CshA of Staphylococcus epidermidis (strain ATCC 12228 / FDA PCI 1200).